A 407-amino-acid polypeptide reads, in one-letter code: Argininosuccinate synthase (407 aa).

Residues 16-24 (AYSGGLDTS) and alanine 44 each bind ATP. Residues tyrosine 96 and serine 101 each contribute to the L-citrulline site. Glycine 126 is an ATP binding site. 3 residues coordinate L-aspartate: threonine 128, asparagine 132, and aspartate 133. Asparagine 132 contacts L-citrulline. Residues arginine 136, serine 185, serine 194, glutamate 270, and tyrosine 282 each contribute to the L-citrulline site.

This sequence belongs to the argininosuccinate synthase family. Type 1 subfamily. In terms of assembly, homotetramer.

The protein resides in the cytoplasm. The enzyme catalyses L-citrulline + L-aspartate + ATP = 2-(N(omega)-L-arginino)succinate + AMP + diphosphate + H(+). The protein operates within amino-acid biosynthesis; L-arginine biosynthesis; L-arginine from L-ornithine and carbamoyl phosphate: step 2/3. This is Argininosuccinate synthase from Shewanella sp. (strain W3-18-1).